Consider the following 469-residue polypeptide: Probable ribonuclease FAU-1 (469 aa).

Belongs to the FAU-1 family.

Probable RNase involved in rRNA stability through maturation and/or degradation of precursor rRNAs. Binds to RNA in loop regions with AU-rich sequences. In Pyrococcus abyssi (strain GE5 / Orsay), this protein is Probable ribonuclease FAU-1.